A 157-amino-acid polypeptide reads, in one-letter code: Arginine repressor (157 aa).

The protein belongs to the ArgR family.

The protein localises to the cytoplasm. It participates in amino-acid biosynthesis; L-arginine biosynthesis [regulation]. Functionally, regulates arginine biosynthesis genes. This Bacteroides fragilis (strain ATCC 25285 / DSM 2151 / CCUG 4856 / JCM 11019 / LMG 10263 / NCTC 9343 / Onslow / VPI 2553 / EN-2) protein is Arginine repressor.